The primary structure comprises 435 residues: Gap junction alpha-3 protein (435 aa).

The stretch at 2 to 15 (GDWSFLGRLLENAQ) is an intramembrane region. The Cytoplasmic portion of the chain corresponds to 16–19 (EHST). Residues 20-40 (VIGKVWLTVLFIFRILVLGAA) form a helical membrane-spanning segment. Residues 41–71 (AEDVWGDEQSDFTCNTQQPGCENVCYDRAFP) are Extracellular-facing. 3 disulfide bridges follow: Cys-54/Cys-192, Cys-61/Cys-186, and Cys-65/Cys-181. The helical transmembrane segment at 72–92 (ISHIRFWALQIIFVSTPTLIY) threads the bilayer. Topologically, residues 93–152 (LGHVLHIVRMEEKKKEREEEEQLKRESPSPKEPPQDNPSSRDDRGRVRMAGALLRTYVFN) are cytoplasmic. Over residues 108-121 (EREEEEQLKRESPS) the composition is skewed to basic and acidic residues. Residues 108–136 (EREEEEQLKRESPSPKEPPQDNPSSRDDR) form a disordered region. A helical membrane pass occupies residues 153 to 173 (IIFKTLFEVGFIAGQYFLYGF). At 174–201 (ELKPLYRCDRWPCPNTVDCFISRPTEKT) the chain is on the extracellular side. The helical transmembrane segment at 202-222 (IFIIFMLAVACASLLLNMLEI) threads the bilayer. At 223-435 (YHLGWKKLKQ…GRARPEDLAI (213 aa)) the chain is on the cytoplasmic side. Residues 332 to 435 (AAERQPPALK…GRARPEDLAI (104 aa)) are disordered. Composition is skewed to low complexity over residues 342 to 389 (AYPA…ALAG) and 415 to 427 (GRASKASRASSGR).

This sequence belongs to the connexin family. Alpha-type (group II) subfamily. As to quaternary structure, a hemichannel or connexon is composed of a hexamer of connexins. A functional gap junction is formed by the apposition of two hemichannels. Forms heteromeric channels with GJA8.

Its subcellular location is the cell membrane. The protein resides in the cell junction. It localises to the gap junction. In terms of biological role, structural component of lens fiber gap junctions. Gap junctions are dodecameric channels that connect the cytoplasm of adjoining cells. They are formed by the docking of two hexameric hemichannels, one from each cell membrane. Small molecules and ions diffuse from one cell to a neighboring cell via the central pore. This Homo sapiens (Human) protein is Gap junction alpha-3 protein (GJA3).